The sequence spans 645 residues: Synaptotagmin-16 (645 aa).

Disordered regions lie at residues 102-121 (AQNSSPSLSQHAKDSCSTMS), 144-192 (EHHL…DSDE), and 206-344 (QSFR…PSGV). The span at 167–177 (ETVNGKKQVNS) shows a compositional bias: polar residues. Over residues 179–192 (GDDEELSTSSDSDE) the composition is skewed to acidic residues. Over residues 287–303 (HQESSVVQSLRRQSTEG) the composition is skewed to polar residues. The region spanning 350–469 (KCGDLDVIFE…HPEGEMKVTL (120 aa)) is the C2 1 domain. Residues 478–503 (SSGGSPLSPSAVSHSDSTSSTQSLSH) form a disordered region. Positions 485–502 (SPSAVSHSDSTSSTQSLS) are enriched in low complexity. One can recognise a C2 2 domain in the interval 505–640 (GAPELLVGLS…TKGQQICRWH (136 aa)).

Belongs to the synaptotagmin family. Homodimer. Can also form heterodimers. As to expression, expressed in brain.

Functionally, may be involved in the trafficking and exocytosis of secretory vesicles in non-neuronal tissues. Is Ca(2+)-independent. In Homo sapiens (Human), this protein is Synaptotagmin-16 (SYT16).